Reading from the N-terminus, the 475-residue chain is Glutamate--tRNA ligase (475 aa).

The 'HIGH' region signature appears at 11-21; it reads PSPTGFLHIGG. Positions 240 to 244 match the 'KMSKS' region motif; that stretch reads KLSKR. Lysine 243 is a binding site for ATP.

The protein belongs to the class-I aminoacyl-tRNA synthetase family. Glutamate--tRNA ligase type 1 subfamily. In terms of assembly, monomer.

The protein localises to the cytoplasm. It carries out the reaction tRNA(Glu) + L-glutamate + ATP = L-glutamyl-tRNA(Glu) + AMP + diphosphate. In terms of biological role, catalyzes the attachment of glutamate to tRNA(Glu) in a two-step reaction: glutamate is first activated by ATP to form Glu-AMP and then transferred to the acceptor end of tRNA(Glu). The protein is Glutamate--tRNA ligase of Bradyrhizobium diazoefficiens (strain JCM 10833 / BCRC 13528 / IAM 13628 / NBRC 14792 / USDA 110).